Reading from the N-terminus, the 124-residue chain is Large ribosomal subunit protein bL12 (124 aa).

It belongs to the bacterial ribosomal protein bL12 family. In terms of assembly, homodimer. Part of the ribosomal stalk of the 50S ribosomal subunit. Forms a multimeric L10(L12)X complex, where L10 forms an elongated spine to which 2 to 4 L12 dimers bind in a sequential fashion. Binds GTP-bound translation factors.

Its function is as follows. Forms part of the ribosomal stalk which helps the ribosome interact with GTP-bound translation factors. Is thus essential for accurate translation. This is Large ribosomal subunit protein bL12 from Borreliella afzelii (strain PKo) (Borrelia afzelii).